Here is a 125-residue protein sequence, read N- to C-terminus: MARLAGVDIPNEKRIEIALTYIFGVGRTRAKETLAATGISPDIRVKDLTDEQLITLRDYLEANYKIEGDLRREVDADIRRKIQINCYQGQRHRKGLPVRGQRTKTNARTRKGPKRTVAGKKKATK.

A disordered region spans residues 90–125 (QRHRKGLPVRGQRTKTNARTRKGPKRTVAGKKKATK).

This sequence belongs to the universal ribosomal protein uS13 family. In terms of assembly, part of the 30S ribosomal subunit. Forms a loose heterodimer with protein S19. Forms two bridges to the 50S subunit in the 70S ribosome.

In terms of biological role, located at the top of the head of the 30S subunit, it contacts several helices of the 16S rRNA. In the 70S ribosome it contacts the 23S rRNA (bridge B1a) and protein L5 of the 50S subunit (bridge B1b), connecting the 2 subunits; these bridges are implicated in subunit movement. Contacts the tRNAs in the A and P-sites. This is Small ribosomal subunit protein uS13 from Bifidobacterium longum (strain DJO10A).